A 386-amino-acid chain; its full sequence is MEVNLLKTHQFSTISIAASFLKPIESAAEPEEETIYFYGAAAYLKEQIIDAFGYAAGSRFMYSANLFFDQQLKTCGTRLIHPLYNGNLHVDALMKTFADLSFPSSLSFEAFEKARNELLLKIEKKFTDPFSYSAARLAEEVFGNPMYGTGMFGRRDRIKAIHPKRFLDATDFIVDLVSQQKQLNILGQVQACDVRGHAPQTSAVTSGRIPVNRHVFETETRSAAGPSVLTLGFDCGEMKDASDYIKIQLIDGLLGKYGHSALFKHFREKDLAVYHVITRYDVMNNLLLVSICTDQLHEKDIPPRVLEAVSAFHTDERELEQAKQFLRNELLLQFDSPEGLLAYMGVLRRFSCTKEALLDGISAVTCRDVLQFIATINYIGAHVVRG.

Functionally, involved in the production of the bacteriocin subtilosin. The sequence is that of Antilisterial bacteriocin subtilosin biosynthesis protein AlbE (albE) from Bacillus subtilis (strain 168).